Here is a 2090-residue protein sequence, read N- to C-terminus: Dysferlin (2090 aa).

Residues 1-101 form the C2 1 domain; it reads MLRVFILFAE…LATPSLSASF (101 aa). Residues 1–2056 lie on the Cytoplasmic side of the membrane; it reads MLRVFILFAE…FILWRRFRCA (2056 aa). Ca(2+) is bound by residues Asp-18, Ile-19, Asp-21, and Asn-40. The segment at 130 to 217 is disordered; the sequence is VPLFPPPASL…SAPPRKLLSD (88 aa). Residues 155–172 show a composition bias toward acidic residues; the sequence is GGEEDTEDQGLTGDEAEP. A Phosphoserine modification is found at Gly-164. Thr-166 is modified (phosphothreonine). Position 167 is a phosphoserine (Gly-167). Pro residues predominate over residues 188–199; sequence PRKPPSHPPPHY. 6 consecutive C2 domains span residues 206–323, 362–498, 1146–1272, 1320–1448, 1571–1689, and 1805–1953; these read RSSA…RKWL, DKED…EEEP, GVNR…PLTR, PPPQ…AESP, PMPP…ARCG, and GRPG…EKCS. Ala-209 carries the post-translational modification Phosphoserine. Pro-219 carries the post-translational modification Phosphothreonine. Ca(2+)-binding residues include Asp-411, Asp-419, Asp-467, Asp-469, Asp-475, Asp-1178, Asp-1184, Asp-1240, and Asp-1242. Positions 1604, 1610, 1659, 1661, 1924, 1927, and 1930 each coordinate Ca(2+). The segment at 2005 to 2027 is disordered; that stretch reads SEHEERPAGQGRDEPNMNPKLED. The chain crosses the membrane as a helical span at residues 2057–2077; the sequence is IILFIILFILLLFLGVFVYAF. At 2078–2090 the chain is on the extracellular side; it reads PNYAAMKLVKPFR.

The protein belongs to the ferlin family. In terms of assembly, interacts with CAV3. Interacts with AHNAK; the interaction is direct and Ca(2+)-independent. Interacts with AHNAK2; the interaction is direct and Ca(2+)-independent. Interacts with ANXA1; the interaction is Ca(2+)- and injury state-dependent. Interacts with ANXA2; the interaction is Ca(2+)- and injury state-dependent. Interacts with CACNA1S and PARVB. Interacts with TRIM72/MG53; interaction is required for transport to sites of cell injury during repair patch formation. Interacts with RIPOR2; this interaction occurs during early myogenic differentiation. It depends on Ca(2+) as a cofactor. In terms of tissue distribution, expressed in skeletal and cardiac muscles (at protein level). Expressed in skeletal muscle and heart. Also found in brain, liver and kidney.

The protein localises to the cell membrane. It localises to the sarcolemma. Its subcellular location is the cytoplasmic vesicle membrane. Functionally, key calcium ion sensor involved in the Ca(2+)-triggered synaptic vesicle-plasma membrane fusion. Plays a role in the sarcolemma repair mechanism of both skeletal muscle and cardiomyocytes that permits rapid resealing of membranes disrupted by mechanical stress. The sequence is that of Dysferlin (Dysf) from Mus musculus (Mouse).